A 35-amino-acid chain; its full sequence is MFGQYEVFVQLLLLALIVLAGPAVILLLYLRGADM.

Residues 7-27 form a helical membrane-spanning segment; sequence VFVQLLLLALIVLAGPAVILL.

Belongs to the Psb30/Ycf12 family. As to quaternary structure, PSII is composed of 1 copy each of membrane proteins PsbA, PsbB, PsbC, PsbD, PsbE, PsbF, PsbH, PsbI, PsbJ, PsbK, PsbL, PsbM, PsbT, PsbX, PsbY, PsbZ, Psb30/Ycf12, peripheral proteins PsbO, CyanoQ (PsbQ), PsbU, PsbV and a large number of cofactors. It forms dimeric complexes.

Its subcellular location is the cellular thylakoid membrane. A core subunit of photosystem II (PSII), probably helps stabilize the reaction center. This is Photosystem II reaction center protein Psb30 from Synechococcus sp. (strain JA-3-3Ab) (Cyanobacteria bacterium Yellowstone A-Prime).